The primary structure comprises 451 residues: uncharacterized protein (451 aa).

The tract at residues 415-435 (AHGDTEWLPPPHLDHGQPRVN) is disordered.

This sequence belongs to the Rv1128c/1148c/1588c/1702c/1945/3466 family.

This is an uncharacterized protein from Mycobacterium tuberculosis (strain ATCC 25618 / H37Rv).